The primary structure comprises 394 residues: Elongation factor Tu (394 aa).

Positions lysine 10–valine 204 constitute a tr-type G domain. A G1 region spans residues glycine 19–threonine 26. Residue glycine 19–threonine 26 participates in GTP binding. Threonine 26 lines the Mg(2+) pocket. Residues glycine 60–serine 64 are G2. Positions aspartate 81–glycine 84 are G3. GTP is bound by residues aspartate 81 to histidine 85 and asparagine 136 to aspartate 139. Residues asparagine 136 to aspartate 139 are G4. Residues serine 174–leucine 176 are G5.

It belongs to the TRAFAC class translation factor GTPase superfamily. Classic translation factor GTPase family. EF-Tu/EF-1A subfamily. In terms of assembly, monomer.

It localises to the cytoplasm. It carries out the reaction GTP + H2O = GDP + phosphate + H(+). GTP hydrolase that promotes the GTP-dependent binding of aminoacyl-tRNA to the A-site of ribosomes during protein biosynthesis. The polypeptide is Elongation factor Tu (Rickettsia rickettsii).